The chain runs to 156 residues: Small ribosomal subunit protein uS7 (156 aa).

It belongs to the universal ribosomal protein uS7 family. Part of the 30S ribosomal subunit. Contacts proteins S9 and S11.

Functionally, one of the primary rRNA binding proteins, it binds directly to 16S rRNA where it nucleates assembly of the head domain of the 30S subunit. Is located at the subunit interface close to the decoding center, probably blocks exit of the E-site tRNA. In Trichlorobacter lovleyi (strain ATCC BAA-1151 / DSM 17278 / SZ) (Geobacter lovleyi), this protein is Small ribosomal subunit protein uS7.